We begin with the raw amino-acid sequence, 222 residues long: Phosphoenolpyruvate guanylyltransferase (222 aa).

Residues threonine 134, glycine 150, and serine 153 each contribute to the phosphoenolpyruvate site.

It belongs to the CofC family.

The catalysed reaction is phosphoenolpyruvate + GTP + H(+) = enolpyruvoyl-2-diphospho-5'-guanosine + diphosphate. The protein operates within cofactor biosynthesis; coenzyme F420 biosynthesis. Its function is as follows. Guanylyltransferase that catalyzes the activation of phosphoenolpyruvate (PEP) as enolpyruvoyl-2-diphospho-5'-guanosine, via the condensation of PEP with GTP. It is involved in the biosynthesis of coenzyme F420, a hydride carrier cofactor. In Roseiflexus sp. (strain RS-1), this protein is Phosphoenolpyruvate guanylyltransferase.